A 270-amino-acid polypeptide reads, in one-letter code: NAD kinase (270 aa).

The active-site Proton acceptor is the Asp-45. Residues 45–46 (DG), 121–122 (NE), Arg-147, Asp-149, 160–165 (TAYSKS), and Ala-184 contribute to the NAD(+) site.

The protein belongs to the NAD kinase family. The cofactor is a divalent metal cation.

The protein resides in the cytoplasm. It catalyses the reaction NAD(+) + ATP = ADP + NADP(+) + H(+). Functionally, involved in the regulation of the intracellular balance of NAD and NADP, and is a key enzyme in the biosynthesis of NADP. Catalyzes specifically the phosphorylation on 2'-hydroxyl of the adenosine moiety of NAD to yield NADP. The sequence is that of NAD kinase from Lactobacillus helveticus (strain DPC 4571).